The following is a 317-amino-acid chain: Transcription factor EC (317 aa).

Residues 1–44 (MTLDHQILNQSFKRSHPPTPSSELLVQHGHPSPESDTGLTGNPL) form a disordered region. The segment at 1–90 (MTLDHQILNQ…GLTSASCPSS (90 aa)) is necessary for transcriptional transactivation. Over residues 34 to 43 (ESDTGLTGNP) the composition is skewed to polar residues. The 54-residue stretch at 110–163 (QKKDNHNLIERRRRYNINYRIKELGTLIPKSNDPDMRWNKGTILKASVEYIKWL) folds into the bHLH domain. The tract at residues 241–317 (TSPELCDQAM…SFSSEDGDEL (77 aa)) is necessary for transcriptional transactivation. Residues 297–317 (PAVSKESSRRSSFSSEDGDEL) are disordered.

Belongs to the MiT/TFE family. As to quaternary structure, homodimer. Forms heterodimers with MITF and TFE3. Interacts with MITF.

The protein resides in the nucleus. Transcriptional regulator that acts as a repressor or an activator. Acts as a transcriptional repressor on minimal promoter containing element F (that includes an E-box sequence). Binds to element F in an E-box sequence-specific manner. Acts as a transcriptional transactivator on the proximal promoter region of the tartrate-resistant acid phosphatase (TRAP) E-box containing promoter. Collaborates with MITF in target gene activation. Acts as a transcriptional repressor on minimal promoter containing mu E3 enhancer sequence. Binds to mu E3 DNA sequence of the immunoglobulin heavy-chain gene enhancer. Binds DNA in a homo- or heterodimeric form. This is Transcription factor EC (TFEC) from Bos taurus (Bovine).